We begin with the raw amino-acid sequence, 249 residues long: 5'-nucleotidase SurE (249 aa).

Positions 9, 10, 40, and 92 each coordinate a divalent metal cation.

It belongs to the SurE nucleotidase family. Requires a divalent metal cation as cofactor.

Its subcellular location is the cytoplasm. It catalyses the reaction a ribonucleoside 5'-phosphate + H2O = a ribonucleoside + phosphate. Nucleotidase that shows phosphatase activity on nucleoside 5'-monophosphates. The chain is 5'-nucleotidase SurE from Shewanella putrefaciens (strain CN-32 / ATCC BAA-453).